We begin with the raw amino-acid sequence, 952 residues long: Isoleucine--tRNA ligase (952 aa).

A 'HIGH' region motif is present at residues 58-68 (PYANGDIHIGH). L-isoleucyl-5'-AMP is bound at residue Glu576. A 'KMSKS' region motif is present at residues 617–621 (KMSKS). Lys620 is a binding site for ATP. Zn(2+)-binding residues include Cys915, Cys918, Cys935, and Cys938.

It belongs to the class-I aminoacyl-tRNA synthetase family. IleS type 1 subfamily. As to quaternary structure, monomer. The cofactor is Zn(2+).

It localises to the cytoplasm. It carries out the reaction tRNA(Ile) + L-isoleucine + ATP = L-isoleucyl-tRNA(Ile) + AMP + diphosphate. Functionally, catalyzes the attachment of isoleucine to tRNA(Ile). As IleRS can inadvertently accommodate and process structurally similar amino acids such as valine, to avoid such errors it has two additional distinct tRNA(Ile)-dependent editing activities. One activity is designated as 'pretransfer' editing and involves the hydrolysis of activated Val-AMP. The other activity is designated 'posttransfer' editing and involves deacylation of mischarged Val-tRNA(Ile). The protein is Isoleucine--tRNA ligase of Aliivibrio fischeri (strain ATCC 700601 / ES114) (Vibrio fischeri).